Reading from the N-terminus, the 312-residue chain is Bifunctional pinoresinol-lariciresinol reductase (312 aa).

NADP(+) is bound by residues 10–16 (GGTGYIG), arginine 35, and lysine 44. Lysine 136 (proton acceptor) is an active-site residue. Arginine 140 contacts NADP(+). Histidine 268 contacts substrate.

This sequence belongs to the NmrA-type oxidoreductase family. Isoflavone reductase subfamily. As to quaternary structure, dimer. As to expression, expressed in seed coats, but not in embryos, leaves, stems and roots.

Reductase involved in lignan biosynthesis. Catalyzes the sequential conversion of pinoresinol into lariciresinol and of lariciresinol into secoisolariciresinol. Abstracts the 4R-hydride from the NADPH cofactor during catalysis. This Linum usitatissimum (Flax) protein is Bifunctional pinoresinol-lariciresinol reductase.